A 666-amino-acid polypeptide reads, in one-letter code: Frizzled-3 (666 aa).

The signal sequence occupies residues 1–22; the sequence is MAMTWIVFSLWPLTVFMGHIGG. Residues 23 to 136 enclose the FZ domain; that stretch reads HSLFSCEPIT…CSRFPDCDEP (114 aa). The Extracellular portion of the chain corresponds to 23–205; that stretch reads HSLFSCEPIT…REELSFARYF (183 aa). Intrachain disulfides connect C28–C89, C36–C82, C73–C110, C99–C133, and C103–C127. N-linked (GlcNAc...) asparagine glycosylation is present at N42. A helical transmembrane segment spans residues 206–226; that stretch reads IGLISIICLSATLFTFLTFLI. The Cytoplasmic portion of the chain corresponds to 227–237; it reads DVTRFRYPERP. A helical transmembrane segment spans residues 238 to 258; the sequence is IIFYAVCYMMVSLIFFIGFLL. Topologically, residues 259–288 are extracellular; the sequence is EDRVACNASIPAQYKASTVTQGSHNKACTM. N265 carries an N-linked (GlcNAc...) asparagine glycan. The helical transmembrane segment at 289–309 threads the bilayer; the sequence is LFMILYFFTMAGSVWWVILTI. Residues 310–328 are Cytoplasmic-facing; it reads TWFLAAVPKWGSEAIEKKA. A helical membrane pass occupies residues 329–349; sequence LLFHASAWGIPGTLTIILLAM. Residues 350–374 are Extracellular-facing; it reads NKIEGDNISGVCFVGLYDVDALRYF. N356 carries an N-linked (GlcNAc...) asparagine glycan. Residues 375 to 395 form a helical membrane-spanning segment; that stretch reads VLAPLCLYVVVGVSLLLAGII. Topologically, residues 396–420 are cytoplasmic; it reads SLNRVRIEIPLEKENQDKLVKFMIR. Residues 421-441 form a helical membrane-spanning segment; that stretch reads IGVFSILYLVPLLVVIGCYFY. At 442 to 477 the chain is on the extracellular side; the sequence is EQAYRGIWETTWIQERCREYHIPCPYQVTQMSRPDL. The chain crosses the membrane as a helical span at residues 478–498; the sequence is ILFLMKYLMALIVGIPSVFWV. Topologically, residues 499-666 are cytoplasmic; the sequence is GSKKTCFEWA…RVIEEDGTSA (168 aa). The short motif at 502–507 is the Lys-Thr-X-X-X-Trp motif, mediates interaction with the PDZ domain of Dvl family members element; it reads KTCFEW. The disordered stretch occupies residues 538–666; the sequence is RDPNTPIIRK…RVIEEDGTSA (129 aa). The segment covering 550–565 has biased composition (polar residues); sequence GTSTQGTSTHASSTQL. Positions 617 to 638 are enriched in basic and acidic residues; that stretch reads LTDHSRHSSSHRLNEQSRHSSI. Polar residues predominate over residues 639–656; the sequence is RDLSNNPMTHITHGTSMN.

This sequence belongs to the G-protein coupled receptor Fz/Smo family. In terms of assembly, interacts with VANGL2. Ubiquitinated by ZNRF3, leading to its degradation by the proteasome. As to expression, widely expressed. Relatively high expression in the CNS, including regions of the limbic system, in kidney, pancreas, skeletal muscle, uterus and testis.

The protein resides in the membrane. The protein localises to the cell membrane. It localises to the cell surface. It is found in the apical cell membrane. In terms of biological role, receptor for Wnt proteins. Most of frizzled receptors are coupled to the beta-catenin canonical signaling pathway, which leads to the activation of disheveled proteins, inhibition of GSK-3 kinase, nuclear accumulation of beta-catenin and activation of Wnt target genes. A second signaling pathway involving PKC and calcium fluxes has been seen for some family members, but it is not yet clear if it represents a distinct pathway or if it can be integrated in the canonical pathway, as PKC seems to be required for Wnt-mediated inactivation of GSK-3 kinase. Both pathways seem to involve interactions with G-proteins. Activation by Wnt5A stimulates PKC activity via a G-protein-dependent mechanism. Involved in transduction and intercellular transmission of polarity information during tissue morphogenesis and/or in differentiated tissues. Plays a role in controlling early axon growth and guidance processes necessary for the formation of a subset of central and peripheral major fiber tracts. Required for the development of major fiber tracts in the central nervous system, including: the anterior commissure, the corpus callosum, the thalamocortical, corticothalamic and nigrostriatal tracts, the corticospinal tract, the fasciculus retroflexus, the mammillothalamic tract, the medial lemniscus, and ascending fiber tracts from the spinal cord to the brain. In the peripheral nervous system, controls axon growth in distinct populations of cranial and spinal motor neurons, including the facial branchimotor nerve, the hypoglossal nerve, the phrenic nerve, and motor nerves innervating dorsal limbs. Involved in the migration of cranial neural crest cells. May also be implicated in the transmission of sensory information from the trunk and limbs to the brain. Controls commissural sensory axons guidance after midline crossing along the anterior-posterior axis in the developing spinal cord in a Wnt-dependent signaling pathway. Together with FZD6, is involved in the neural tube closure and plays a role in the regulation of the establishment of planar cell polarity (PCP), particularly in the orientation of asymmetric bundles of stereocilia on the apical faces of a subset of auditory and vestibular sensory cells located in the inner ear. Promotes neurogenesis by maintaining sympathetic neuroblasts within the cell cycle in a beta-catenin-dependent manner. In Homo sapiens (Human), this protein is Frizzled-3 (FZD3).